A 237-amino-acid chain; its full sequence is Sensory rhodopsin-2 (237 aa).

Residues 1–2 are Extracellular-facing; that stretch reads MA. The chain crosses the membrane as a helical span at residues 3 to 23; it reads LTTWFWVGAVGMLAGTVLPIR. At 24–31 the chain is on the cytoplasmic side; sequence DCIRHPSH. Residues 32 to 53 traverse the membrane as a helical segment; sequence RRYDLVLAGITGLAAIAYTTMG. Over 54–67 the chain is Extracellular; the sequence is LGITATTVGDRTVY. The helical transmembrane segment at 68–89 threads the bilayer; sequence LARYIDWLVTTPLIVLYLAMLA. Topologically, residues 90-92 are cytoplasmic; it reads RPG. A helical transmembrane segment spans residues 93 to 115; that stretch reads HRTSAWLLAADVFVIAAGIAAAL. Over 116-119 the chain is Extracellular; it reads TTGV. A helical membrane pass occupies residues 120-147; it reads QRWLFFAVGAAGYAALLYGLLGTLPRAL. At 148–150 the chain is on the cytoplasmic side; sequence GDD. A helical membrane pass occupies residues 151 to 178; that stretch reads PRVRSLFVTLRNITVVLWTLYPVVWLLS. The Extracellular portion of the chain corresponds to 179–186; the sequence is PAGIGILQ. A helical transmembrane segment spans residues 187–214; the sequence is TEMYTIVVVYLDFISKVAFVAFAVLGAD. Residue Lys202 is modified to N6-(retinylidene)lysine. The Cytoplasmic portion of the chain corresponds to 215-237; it reads AVSRLVAADAAAPATAEPTPDGD.

This sequence belongs to the archaeal/bacterial/fungal opsin family. As to quaternary structure, interacts with HTR-II.

The protein resides in the cell membrane. Photophobic photoreceptor responsible for the negative phototaxis. Activates the sensory rhodopsin II transducer (HTR-II) in response to blue light. The protein is Sensory rhodopsin-2 (sop2) of Halobacterium salinarum (strain ATCC 700922 / JCM 11081 / NRC-1) (Halobacterium halobium).